The following is a 173-amino-acid chain: Nucleoside-triphosphatase THEP1 (173 aa).

Residues 15-22 and 101-108 contribute to the ATP site; these read GMPGVGKT and LKIIDEIG.

The protein belongs to the THEP1 NTPase family.

The catalysed reaction is a ribonucleoside 5'-triphosphate + H2O = a ribonucleoside 5'-diphosphate + phosphate + H(+). Its function is as follows. Has nucleotide phosphatase activity towards ATP, GTP, CTP, TTP and UTP. May hydrolyze nucleoside diphosphates with lower efficiency. The chain is Nucleoside-triphosphatase THEP1 from Pyrobaculum aerophilum (strain ATCC 51768 / DSM 7523 / JCM 9630 / CIP 104966 / NBRC 100827 / IM2).